The sequence spans 465 residues: Ribulose bisphosphate carboxylase large chain (465 aa).

Lysine 4 is subject to N6,N6,N6-trimethyllysine. Residues asparagine 113 and threonine 163 each contribute to the substrate site. Lysine 165 serves as the catalytic Proton acceptor. Residue lysine 167 participates in substrate binding. The Mg(2+) site is built by lysine 191, aspartate 193, and glutamate 194. Lysine 191 carries the N6-carboxylysine modification. Histidine 284 functions as the Proton acceptor in the catalytic mechanism. Substrate-binding residues include arginine 285, histidine 317, and serine 369.

This sequence belongs to the RuBisCO large chain family. Type I subfamily. As to quaternary structure, heterohexadecamer of 8 large chains and 8 small chains; disulfide-linked. The disulfide link is formed within the large subunit homodimers. Mg(2+) is required as a cofactor. The disulfide bond which can form in the large chain dimeric partners within the hexadecamer appears to be associated with oxidative stress and protein turnover.

It localises to the plastid. Its subcellular location is the chloroplast. It carries out the reaction 2 (2R)-3-phosphoglycerate + 2 H(+) = D-ribulose 1,5-bisphosphate + CO2 + H2O. It catalyses the reaction D-ribulose 1,5-bisphosphate + O2 = 2-phosphoglycolate + (2R)-3-phosphoglycerate + 2 H(+). Its function is as follows. RuBisCO catalyzes two reactions: the carboxylation of D-ribulose 1,5-bisphosphate, the primary event in carbon dioxide fixation, as well as the oxidative fragmentation of the pentose substrate in the photorespiration process. Both reactions occur simultaneously and in competition at the same active site. This is Ribulose bisphosphate carboxylase large chain from Dillenia indica (Elephant apple).